Reading from the N-terminus, the 62-residue chain is Large ribosomal subunit protein bL28 (62 aa).

The interval 1–27 (MAKECVITGRKSRSGNKRSHAMNSSKR) is disordered. A compositionally biased stretch (basic residues) spans 10–20 (RKSRSGNKRSH).

Belongs to the bacterial ribosomal protein bL28 family.

This is Large ribosomal subunit protein bL28 from Listeria innocua serovar 6a (strain ATCC BAA-680 / CLIP 11262).